Here is a 787-residue protein sequence, read N- to C-terminus: METQLQNDQLFLEWFGQNLLDCHFAQNVSVYLQDASMVHFKTFSEQIKIIRAPMGSGKTSALIEFLKTVSYIDSVLVISCRKTFAAELLNRFKKNDLNDFYLYSEIKERQINKNKLIIQVESLHRVTRNYHVLILDEIMSIIKQFYSKTMTKVKEVDAKLLTLIRNSTQIVAMDATVNRYVVDFFSLCMPHFKSALIINTFVSANFSNRSAYFCPTFIDGNLAFYGILKQKLGLGKNICLFCSTVTSADFMSELLKTDFPDKKILLLTSKQGKCHSVESWINYNIVIYTSIVTVGLSFDFLHFSAMFVYIHLVKGGPDMVSVFQSMGRVRKVTDNEIFIYLNPALIQVPLSVSPISIPQCYDWTLFEKSILQCSCMDFNKKCLSAQNYLSNSMIKQFFRIRHYIEKTTLLNLPDSLYLLCLLLDSNSIKVHIDGDVFPIAKEKFYAFTKMLVQGCHFFEKKKTDFVENTMTLKELFSNTNITVNGEFYELGNFQVHKDYIVNLNNFQNLFLKNDVDIFVIEEIMLTLKSEIRRFVFINALLQKYVATGIDVEKIKAFFKSRIKTFTLPENYICSKFYLLSDISGVHECGMLMDVAFLAESIRADLNLQSCTDTQTDISEDAILLCAARRSSEILRILQIVFTTHVQLFEKYNSYTLYLFNRLKGMQLNTWSLSIAKFSVSIIRMFFKCAFNMNLVKSKPRYIVGKPFRSLTKREIETLLDMWHVSRTNLKTYKELRKALTEASKKRQRKKIYKLLGHNISSYISETGCLFQHADAGMCLSSGCLLRS.

Residues 39-195 form the Helicase ATP-binding domain; it reads HFKTFSEQIK…SLCMPHFKSA (157 aa). 52 to 59 contributes to the ATP binding site; it reads APMGSGKT.

Belongs to the herpesviridae OriBP family.

Functionally, probably involved in DNA replication. Binds the origin of replication (ori). The protein is Replication origin-binding protein (U73) of Human herpesvirus 7 (strain JI) (HHV-7).